The chain runs to 823 residues: ATM interactor (823 aa).

The tract at residues 28 to 67 is disordered; that stretch reads GAAAAASGPWVPPGPRLRGSRPRPAGATQQPAVPAPPAGE. Positions 49-59 are enriched in low complexity; sequence PRPAGATQQPA. The segment at 84–109 adopts a C2H2-type 1 zinc-finger fold; sequence ILCTVRGCGKILPNSPALNMHLVKSH. The C2H2-type 2; degenerate zinc finger occupies 165-184; the sequence is HKCSKCSNSYGTEWDLKRHA. Over residues 214 to 225 the composition is skewed to basic and acidic residues; the sequence is HEIPAEHRDPPS. 3 disordered regions span residues 214 to 234, 268 to 289, and 610 to 634; these read HEIP…ENCA, EPSF…TPPR, and RSLL…NPGI. Positions 223–442 are required for formation of RAD51 foci; it reads PPSKKRKMEN…ADSSVSSCSQ (220 aa). Polar residues-rich tracts occupy residues 275–286 and 613–629; these read CGSNTDKQTLTT and LSDT…SGPA.

In terms of assembly, interacts via its C-terminus with ATM. Interacts with DYNLL1; this interaction inhibits ATMIN transcriptional activity and hence may play a role in a feedback loop whereby DYNLL1 inhibits transactivation of its own promoter by ATMIN. In terms of tissue distribution, ubiquitously expressed in normal tissues and cancer cell lines with highest levels in placenta and skeletal muscle.

It localises to the nucleus. Its function is as follows. Transcription factor. Plays a crucial role in cell survival and RAD51 foci formation in response to methylating DNA damage. Involved in regulating the activity of ATM in the absence of DNA damage. May play a role in stabilizing ATM. Binds to the DYNLL1 promoter and activates its transcription. The chain is ATM interactor (ATMIN) from Homo sapiens (Human).